Consider the following 529-residue polypeptide: Peptide chain release factor 3 (529 aa).

Positions 11–280 constitute a tr-type G domain; that stretch reads SKRRTFAIIS…GLTEWAPAPK (270 aa). Residues 20 to 27, 88 to 92, and 142 to 145 contribute to the GTP site; these read SHPDAGKT, DTPGH, and NKLD.

This sequence belongs to the TRAFAC class translation factor GTPase superfamily. Classic translation factor GTPase family. PrfC subfamily.

The protein resides in the cytoplasm. Functionally, increases the formation of ribosomal termination complexes and stimulates activities of RF-1 and RF-2. It binds guanine nucleotides and has strong preference for UGA stop codons. It may interact directly with the ribosome. The stimulation of RF-1 and RF-2 is significantly reduced by GTP and GDP, but not by GMP. The protein is Peptide chain release factor 3 of Vibrio parahaemolyticus serotype O3:K6 (strain RIMD 2210633).